The chain runs to 292 residues: Zinc metalloproteinase nas-3 (292 aa).

The N-terminal stretch at 1–16 is a signal peptide; the sequence is MYRFIIFFSLLALTAS. Positions 56-249 constitute a Peptidase M12A domain; it reads RGIAIHPWQW…RNINTLYKCN (194 aa). Disulfide bonds link Cys-103-Cys-248 and Cys-128-Cys-158. Zn(2+) is bound at residue His-169. Glu-170 is a catalytic residue. Residues His-173 and His-179 each contribute to the Zn(2+) site.

Zn(2+) serves as cofactor.

Its subcellular location is the secreted. Its function is as follows. Metalloprotease. The chain is Zinc metalloproteinase nas-3 (nas-3) from Caenorhabditis elegans.